A 229-amino-acid chain; its full sequence is Potassium/proton antiporter CemA (229 aa).

4 helical membrane-spanning segments follow: residues 7 to 27, 106 to 126, 154 to 174, and 189 to 209; these read FIPF…YLSF, MILH…YSIL, ILLV…ELLI, and IISS…KYWI.

The protein belongs to the CemA family.

It localises to the plastid. Its subcellular location is the chloroplast inner membrane. The enzyme catalyses K(+)(in) + H(+)(out) = K(+)(out) + H(+)(in). Its function is as follows. Contributes to K(+)/H(+) antiport activity by supporting proton efflux to control proton extrusion and homeostasis in chloroplasts in a light-dependent manner to modulate photosynthesis. Prevents excessive induction of non-photochemical quenching (NPQ) under continuous-light conditions. Indirectly promotes efficient inorganic carbon uptake into chloroplasts. The chain is Potassium/proton antiporter CemA from Spinacia oleracea (Spinach).